The sequence spans 314 residues: Transcription factor TCP20 (314 aa).

Disordered stretches follow at residues 1–91 (MDPK…RGRR) and 295–314 (NHEE…GSGR). Basic and acidic residues-rich tracts occupy residues 38 to 49 (DENRKPTTEIKD) and 77 to 89 (SNKD…EGRG). One can recognise a TCP domain in the interval 78–132 (NKDRHTKVEGRGRRIRMPALCAARIFQLTRELGHKSDGETIQWLLQQAEPSIIAA).

As to quaternary structure, interacts with PURA1. Interacts with SPL.

The protein localises to the nucleus. Functionally, transcription factor that binds to the site II motif (3'-TGGGCC/T-5') in the promoter of PCNA-2 and to 3'-GCCCG/A-5' elements in the promoters of cyclin CYCB1-1 and ribosomal protein genes. In Arabidopsis thaliana (Mouse-ear cress), this protein is Transcription factor TCP20 (TCP20).